A 465-amino-acid polypeptide reads, in one-letter code: 3-isopropylmalate dehydratase large subunit (465 aa).

Residues cysteine 346, cysteine 406, and cysteine 409 each contribute to the [4Fe-4S] cluster site.

Belongs to the aconitase/IPM isomerase family. LeuC type 1 subfamily. In terms of assembly, heterodimer of LeuC and LeuD. It depends on [4Fe-4S] cluster as a cofactor.

The enzyme catalyses (2R,3S)-3-isopropylmalate = (2S)-2-isopropylmalate. It participates in amino-acid biosynthesis; L-leucine biosynthesis; L-leucine from 3-methyl-2-oxobutanoate: step 2/4. In terms of biological role, catalyzes the isomerization between 2-isopropylmalate and 3-isopropylmalate, via the formation of 2-isopropylmaleate. The protein is 3-isopropylmalate dehydratase large subunit of Leptospira interrogans serogroup Icterohaemorrhagiae serovar copenhageni (strain Fiocruz L1-130).